Reading from the N-terminus, the 496-residue chain is Rhamnulokinase (496 aa).

13–17 is a binding site for ATP; the sequence is ASSGR. Substrate contacts are provided by residues Gly-83 and 236–238; that span reads HDT. The active-site Proton acceptor is the Asp-237. Thr-259 contacts ATP. Asn-296 is a binding site for substrate. Residue Gln-304 coordinates ATP. Cys-353 and Cys-370 form a disulfide bridge. Residue Gly-402 coordinates ATP. The cysteines at positions 413 and 417 are disulfide-linked.

This sequence belongs to the rhamnulokinase family. Mg(2+) serves as cofactor.

The catalysed reaction is L-rhamnulose + ATP = L-rhamnulose 1-phosphate + ADP + H(+). It participates in carbohydrate degradation; L-rhamnose degradation; glycerone phosphate from L-rhamnose: step 2/3. Functionally, involved in the catabolism of L-rhamnose (6-deoxy-L-mannose). Catalyzes the transfer of the gamma-phosphate group from ATP to the 1-hydroxyl group of L-rhamnulose to yield L-rhamnulose 1-phosphate. The polypeptide is Rhamnulokinase (Pectobacterium atrosepticum (strain SCRI 1043 / ATCC BAA-672) (Erwinia carotovora subsp. atroseptica)).